A 452-amino-acid polypeptide reads, in one-letter code: MLMPFEIMETIKMIQEENLDIRTITMGISLRDCASSNSKETRDKIYNKITRLAANLVKVGEDIEKEFGIPIVNKRISVTPISLVAESSDEENYIKFAETLDKAADAVGVNFIGGFSALVQKGYTIGDRRLIASIPEALSSTKKVCSSVNVASTKAGINMDAVREMGHVIKKAAELSADSGGLACAKLVVFANVPEDNPFMAGAFHGVGEPECVINVGVSGPGVVKSALEKVRGADFETVSETIKKTAFKITRMGQLVAREASRRLGVAFGIVDLSLAPTPTIGDSVAHILEEMGLEKCGTHGTTAALALLNDAVKKGGTMASSSVGGLSGAFIPVSEDAGMIDAVKAGALSIEKLEAMTCVCSVGLDMIVVPGDTSEETISAIIADEAAIGVINNKTTAVRIIPAPGKKVGDIVEFGGLLGSGPVMKVSNFSSRDFINRGGRIPAPLNSLRN.

It belongs to the UPF0210 family. As to quaternary structure, homodimer.

This is UPF0210 protein Cthe_0410 from Acetivibrio thermocellus (strain ATCC 27405 / DSM 1237 / JCM 9322 / NBRC 103400 / NCIMB 10682 / NRRL B-4536 / VPI 7372) (Clostridium thermocellum).